A 524-amino-acid chain; its full sequence is Bifunctional purine biosynthesis protein PurH (524 aa).

An MGS-like domain is found at 1–144; the sequence is MTRRALVSVS…KNSAHVGVVV (144 aa).

The protein belongs to the PurH family.

It carries out the reaction (6R)-10-formyltetrahydrofolate + 5-amino-1-(5-phospho-beta-D-ribosyl)imidazole-4-carboxamide = 5-formamido-1-(5-phospho-D-ribosyl)imidazole-4-carboxamide + (6S)-5,6,7,8-tetrahydrofolate. The catalysed reaction is IMP + H2O = 5-formamido-1-(5-phospho-D-ribosyl)imidazole-4-carboxamide. Its pathway is purine metabolism; IMP biosynthesis via de novo pathway; 5-formamido-1-(5-phospho-D-ribosyl)imidazole-4-carboxamide from 5-amino-1-(5-phospho-D-ribosyl)imidazole-4-carboxamide (10-formyl THF route): step 1/1. It participates in purine metabolism; IMP biosynthesis via de novo pathway; IMP from 5-formamido-1-(5-phospho-D-ribosyl)imidazole-4-carboxamide: step 1/1. In Anaeromyxobacter dehalogenans (strain 2CP-C), this protein is Bifunctional purine biosynthesis protein PurH.